We begin with the raw amino-acid sequence, 78 residues long: Small ribosomal subunit protein bS18 (78 aa).

The protein belongs to the bacterial ribosomal protein bS18 family. In terms of assembly, part of the 30S ribosomal subunit. Forms a tight heterodimer with protein bS6.

Binds as a heterodimer with protein bS6 to the central domain of the 16S rRNA, where it helps stabilize the platform of the 30S subunit. The protein is Small ribosomal subunit protein bS18 of Alkaliphilus oremlandii (strain OhILAs) (Clostridium oremlandii (strain OhILAs)).